The chain runs to 881 residues: Alanine--tRNA ligase (881 aa).

Residues histidine 563, histidine 567, cysteine 672, and histidine 676 each coordinate Zn(2+).

The protein belongs to the class-II aminoacyl-tRNA synthetase family. The cofactor is Zn(2+).

Its subcellular location is the cytoplasm. The catalysed reaction is tRNA(Ala) + L-alanine + ATP = L-alanyl-tRNA(Ala) + AMP + diphosphate. In terms of biological role, catalyzes the attachment of alanine to tRNA(Ala) in a two-step reaction: alanine is first activated by ATP to form Ala-AMP and then transferred to the acceptor end of tRNA(Ala). Also edits incorrectly charged Ser-tRNA(Ala) and Gly-tRNA(Ala) via its editing domain. In Azorhizobium caulinodans (strain ATCC 43989 / DSM 5975 / JCM 20966 / LMG 6465 / NBRC 14845 / NCIMB 13405 / ORS 571), this protein is Alanine--tRNA ligase.